The sequence spans 214 residues: tRNA (guanine-N(7)-)-methyltransferase (214 aa).

The S-adenosyl-L-methionine site is built by Glu-44, Glu-69, Asp-96, and Asp-118. Asp-118 is an active-site residue. Substrate contacts are provided by residues Lys-122, Asp-154, and 191 to 194 (TEYE).

It belongs to the class I-like SAM-binding methyltransferase superfamily. TrmB family.

It carries out the reaction guanosine(46) in tRNA + S-adenosyl-L-methionine = N(7)-methylguanosine(46) in tRNA + S-adenosyl-L-homocysteine. Its pathway is tRNA modification; N(7)-methylguanine-tRNA biosynthesis. Catalyzes the formation of N(7)-methylguanine at position 46 (m7G46) in tRNA. The sequence is that of tRNA (guanine-N(7)-)-methyltransferase from Listeria monocytogenes serovar 1/2a (strain ATCC BAA-679 / EGD-e).